The following is an 864-amino-acid chain: N-alpha-acetyltransferase 16, NatA auxiliary subunit (864 aa).

TPR repeat units follow at residues 46–79 (GETL…DVKS), 80–113 (HVCW…DKDN), 148–184 (RASW…PPNK), 224–257 (LLVE…NAEN), 374–407 (LWVQ…TPTL), 409–441 (ELFY…DTAD), and 485–518 (MWFQ…FFEI). The segment at 603-638 (QKKAKLEEERKHAERERQQKNQKKKRDEEEEEASGL) is disordered. The segment covering 606 to 621 (AKLEEERKHAERERQQ) has biased composition (basic and acidic residues).

Component of the N-terminal acetyltransferase A (NatA) complex composed of NAA10 and NAA16.

Auxillary subunit of the N-terminal acetyltransferase A (NatA) complex which displays alpha (N-terminal) acetyltransferase activity. The sequence is that of N-alpha-acetyltransferase 16, NatA auxiliary subunit (NAA16) from Homo sapiens (Human).